Consider the following 392-residue polypeptide: Succinate--CoA ligase [ADP-forming] subunit beta (392 aa).

Residues 9-248 (KDILRKFGVA…TNEEDPFEVE (240 aa)) form the ATP-grasp domain. ATP-binding positions include Lys50, 57 to 59 (GRG), Glu103, Met106, and Glu111. The Mg(2+) site is built by Asn203 and Asp217. Residues Asn268 and 325–327 (GIV) each bind substrate.

This sequence belongs to the succinate/malate CoA ligase beta subunit family. As to quaternary structure, heterotetramer of two alpha and two beta subunits. Mg(2+) is required as a cofactor.

It catalyses the reaction succinate + ATP + CoA = succinyl-CoA + ADP + phosphate. The enzyme catalyses GTP + succinate + CoA = succinyl-CoA + GDP + phosphate. The protein operates within carbohydrate metabolism; tricarboxylic acid cycle; succinate from succinyl-CoA (ligase route): step 1/1. Functionally, succinyl-CoA synthetase functions in the citric acid cycle (TCA), coupling the hydrolysis of succinyl-CoA to the synthesis of either ATP or GTP and thus represents the only step of substrate-level phosphorylation in the TCA. The beta subunit provides nucleotide specificity of the enzyme and binds the substrate succinate, while the binding sites for coenzyme A and phosphate are found in the alpha subunit. This Pelodictyon phaeoclathratiforme (strain DSM 5477 / BU-1) protein is Succinate--CoA ligase [ADP-forming] subunit beta.